The primary structure comprises 302 residues: Taste receptor type 2 member 104 (302 aa).

Topologically, residues 1 to 7 are extracellular; the sequence is MLSALES. Residues 8-28 traverse the membrane as a helical segment; it reads ILLSVATSEAMLGVLGNTFIV. The Cytoplasmic portion of the chain corresponds to 29–43; that stretch reads LVNYTDWVRNKKLSK. The helical transmembrane segment at 44 to 64 threads the bilayer; the sequence is INFILTGLAISRIFTIWIITL. Topologically, residues 65-87 are extracellular; the sequence is DAYTKVFLLTMLMPSSLHECMSY. A helical transmembrane segment spans residues 88–108; that stretch reads IWVIINHLSVWFSTSLGIFYF. At 109 to 128 the chain is on the cytoplasmic side; it reads LKIANFSHYIFLWMKRRADK. Residues 129–149 form a helical membrane-spanning segment; that stretch reads VFVFLIVFLIITWLASFPLAV. Residues 150-182 lie on the Extracellular side of the membrane; the sequence is KVIKDVKIYQSNTSWLIHLEKSELLINYVFANM. An N-linked (GlcNAc...) asparagine glycan is attached at Asn-161. The helical transmembrane segment at 183-203 threads the bilayer; it reads GPISLFIVAIIACFLLTISLW. Residues 204 to 229 are Cytoplasmic-facing; sequence RHSRQMQSIGSGFRDLNTEAHMKAMK. Residues 230-250 form a helical membrane-spanning segment; the sequence is VLIAFIILFILYFLGILIETL. At 251–259 the chain is on the extracellular side; that stretch reads CLFLTNNKL. Residues 260 to 280 form a helical membrane-spanning segment; the sequence is LFIFGFTLSAMYPCCHSFILI. The Cytoplasmic segment spans residues 281–302; the sequence is LTSRELKQATMRALQRLKCCET.

This sequence belongs to the G-protein coupled receptor T2R family.

It is found in the membrane. In terms of biological role, putative taste receptor which may play a role in the perception of bitterness. The chain is Taste receptor type 2 member 104 from Mus musculus (Mouse).